Here is a 383-residue protein sequence, read N- to C-terminus: Acetylornithine deacetylase (383 aa).

Position 80 (H80) interacts with Zn(2+). The active site involves D82. D112 serves as a coordination point for Zn(2+). Residue E144 is part of the active site. The Zn(2+) site is built by E145, E169, and H355.

Belongs to the peptidase M20A family. ArgE subfamily. Homodimer. Zn(2+) is required as a cofactor. Co(2+) serves as cofactor. Requires glutathione as cofactor.

It is found in the cytoplasm. The catalysed reaction is N(2)-acetyl-L-ornithine + H2O = L-ornithine + acetate. It functions in the pathway amino-acid biosynthesis; L-arginine biosynthesis; L-ornithine from N(2)-acetyl-L-ornithine (linear): step 1/1. In terms of biological role, catalyzes the hydrolysis of the amide bond of N(2)-acetylated L-amino acids. Cleaves the acetyl group from N-acetyl-L-ornithine to form L-ornithine, an intermediate in L-arginine biosynthesis pathway, and a branchpoint in the synthesis of polyamines. The chain is Acetylornithine deacetylase from Klebsiella pneumoniae (strain 342).